Here is a 120-residue protein sequence, read N- to C-terminus: Ribosome-binding factor A (120 aa).

It belongs to the RbfA family. In terms of assembly, monomer. Binds 30S ribosomal subunits, but not 50S ribosomal subunits or 70S ribosomes.

The protein localises to the cytoplasm. One of several proteins that assist in the late maturation steps of the functional core of the 30S ribosomal subunit. Associates with free 30S ribosomal subunits (but not with 30S subunits that are part of 70S ribosomes or polysomes). Required for efficient processing of 16S rRNA. May interact with the 5'-terminal helix region of 16S rRNA. The sequence is that of Ribosome-binding factor A from Borreliella burgdorferi (strain ATCC 35210 / DSM 4680 / CIP 102532 / B31) (Borrelia burgdorferi).